The chain runs to 141 residues: 16 kDa protein (141 aa).

A disordered region spans residues 97–119 (ASATVKKSHKSKPSKKKFKERKD). Residues 102-115 (KKSHKSKPSKKKFK) show a composition bias toward basic residues.

This is 16 kDa protein from Beta vulgaris (Sugar beet).